A 152-amino-acid polypeptide reads, in one-letter code: Large ribosomal subunit protein bL9 (152 aa).

Belongs to the bacterial ribosomal protein bL9 family.

Binds to the 23S rRNA. This chain is Large ribosomal subunit protein bL9, found in Acaryochloris marina (strain MBIC 11017).